Here is a 366-residue protein sequence, read N- to C-terminus: Aminomethyltransferase (366 aa).

Belongs to the GcvT family. In terms of assembly, the glycine cleavage system is composed of four proteins: P, T, L and H.

The catalysed reaction is N(6)-[(R)-S(8)-aminomethyldihydrolipoyl]-L-lysyl-[protein] + (6S)-5,6,7,8-tetrahydrofolate = N(6)-[(R)-dihydrolipoyl]-L-lysyl-[protein] + (6R)-5,10-methylene-5,6,7,8-tetrahydrofolate + NH4(+). Functionally, the glycine cleavage system catalyzes the degradation of glycine. In Neisseria meningitidis serogroup A / serotype 4A (strain DSM 15465 / Z2491), this protein is Aminomethyltransferase.